The primary structure comprises 398 residues: Lysophospholipid transporter LplT (398 aa).

12 helical membrane-spanning segments follow: residues 16–36 (MIAV…LLFA), 53–73 (ILQM…GQVA), 91–111 (AGAL…LVGV), 139–159 (LMEA…GILA), 163–183 (IVAA…ANLY), 195–213 (SWTP…VVLW), 227–247 (LFWG…PVAL), 253–273 (ATPT…AGAA), 286–306 (MPAG…TTLF), 310–330 (ALLL…NALL), 344–364 (IAVQ…LYSL), and 372–392 (VVGV…ALWL).

It belongs to the major facilitator superfamily. LplT (TC 2.A.1.42) family.

The protein resides in the cell inner membrane. Its function is as follows. Catalyzes the facilitated diffusion of 2-acyl-glycero-3-phosphoethanolamine (2-acyl-GPE) into the cell. The polypeptide is Lysophospholipid transporter LplT (Serratia proteamaculans (strain 568)).